A 285-amino-acid polypeptide reads, in one-letter code: MFLLYRRLPSFARTTTTTLLCKSMEPAITATSSSSFGGGSSRLAALAQQLRQYKPPPSSSFDDSEEMQTDQETAGKVVSQVGFQESIAPLSKDPDRFKPKRAAVLICLFEGDDGDLRVILTKRSSKLSTHSGEVSLPGGKAEEDDKDDGMTATREAEEEIGLDPSLVDVVTSLEPFLSKHLLRVIPVIGILRDKNKFNPIPNPGEVEAVFDAPLEMFLKDENRRSEEREWMGEKYLIHYFDYRTGDKDYMIWGLTAGILIRAASVTYERPPAFIEQCPKFKYPKM.

The transit peptide at 1 to 23 (MFLLYRRLPSFARTTTTTLLCKS) directs the protein to the mitochondrion. An N-acetylmethionine modification is found at M24. Disordered stretches follow at residues 51–72 (RQYK…TDQE) and 129–152 (THSG…GMTA). A Nudix hydrolase domain is found at 99–255 (PKRAAVLICL…DKDYMIWGLT (157 aa)). Positions 140–161 (KAEEDDKDDGMTATREAEEEIG) match the Nudix box motif. The Mg(2+) site is built by E155 and E159.

It belongs to the Nudix hydrolase family. The cofactor is Mg(2+). Mn(2+) serves as cofactor. As to expression, expressed in roots, leaves, stems and inflorescences.

The protein localises to the mitochondrion. Its function is as follows. Coenzyme A diphosphatase which mediates the cleavage of oxidized CoA. Can use malonyl-CoA, hexanoyl-CoA, lauroyl-CoA, myristoyl-CoA and palmitoyl-CoA as substrates, but not isobutyryl-CoA or propionyl-CoA. The protein is Nudix hydrolase 15, mitochondrial (NUDT15) of Arabidopsis thaliana (Mouse-ear cress).